A 150-amino-acid chain; its full sequence is MSLLKLCKGDLLTRVLATGTFDLLHPGHLHYLSEARKLGNELYVIVARESMIKHKPKPVIPENQRVTMVNSLDVVDKAVLGSETNIYEPIKNIKPDVITIGYDQKFSSDSIEKNLEELGINAKVVRINKLSDCSLCSSGKIIDRILERYC.

ATP contacts are provided by residues Thr-20 to Phe-21, His-25 to His-28, and Asp-103.

The protein belongs to the archaeal FAD synthase family. Homodimer. A divalent metal cation serves as cofactor.

It carries out the reaction FMN + ATP + H(+) = FAD + diphosphate. It participates in cofactor biosynthesis; FAD biosynthesis; FAD from FMN: step 1/1. In terms of biological role, catalyzes the transfer of the AMP portion of ATP to flavin mononucleotide (FMN) to produce flavin adenine dinucleotide (FAD) coenzyme. This Methanohalobium evestigatum (strain ATCC BAA-1072 / DSM 3721 / NBRC 107634 / OCM 161 / Z-7303) protein is FAD synthase.